Here is a 353-residue protein sequence, read N- to C-terminus: UPF0283 membrane protein YcjF (353 aa).

The span at 1–19 (MSEPLKPRIDFAEPLKEEP) shows a compositional bias: basic and acidic residues. The disordered stretch occupies residues 1–35 (MSEPLKPRIDFAEPLKEEPTSAFKAQQTFSEAESR). The next 3 membrane-spanning stretches (helical) occupy residues 70–90 (MVMG…VQWT), 100–120 (VALG…GSVV), and 213–233 (ESTL…FIAW).

Belongs to the UPF0283 family.

It localises to the cell inner membrane. The chain is UPF0283 membrane protein YcjF from Salmonella enteritidis PT4 (strain P125109).